A 363-amino-acid chain; its full sequence is GDSL esterase/lipase At1g29670 (363 aa).

Residues 1 to 24 (MESYLTKWCVVLVLLCFGFSVVKA) form the signal peptide. S39 serves as the catalytic Nucleophile. Catalysis depends on residues D327 and H330.

It belongs to the 'GDSL' lipolytic enzyme family.

Its subcellular location is the secreted. In Arabidopsis thaliana (Mouse-ear cress), this protein is GDSL esterase/lipase At1g29670.